We begin with the raw amino-acid sequence, 313 residues long: Porphobilinogen deaminase (313 aa).

Cys242 carries the post-translational modification S-(dipyrrolylmethanemethyl)cysteine.

It belongs to the HMBS family. As to quaternary structure, monomer. Dipyrromethane is required as a cofactor.

It catalyses the reaction 4 porphobilinogen + H2O = hydroxymethylbilane + 4 NH4(+). It functions in the pathway porphyrin-containing compound metabolism; protoporphyrin-IX biosynthesis; coproporphyrinogen-III from 5-aminolevulinate: step 2/4. Tetrapolymerization of the monopyrrole PBG into the hydroxymethylbilane pre-uroporphyrinogen in several discrete steps. The chain is Porphobilinogen deaminase from Escherichia coli O7:K1 (strain IAI39 / ExPEC).